Reading from the N-terminus, the 433-residue chain is Serine--tRNA ligase (433 aa).

Residue 235-237 (TSE) participates in L-serine binding. ATP is bound at residue 266–268 (RSE). Glu-289 is an L-serine binding site. 353 to 356 (EISS) is an ATP binding site. Residue Ser-388 participates in L-serine binding.

Belongs to the class-II aminoacyl-tRNA synthetase family. Type-1 seryl-tRNA synthetase subfamily. Homodimer. The tRNA molecule binds across the dimer.

The protein localises to the cytoplasm. The catalysed reaction is tRNA(Ser) + L-serine + ATP = L-seryl-tRNA(Ser) + AMP + diphosphate + H(+). The enzyme catalyses tRNA(Sec) + L-serine + ATP = L-seryl-tRNA(Sec) + AMP + diphosphate + H(+). Its pathway is aminoacyl-tRNA biosynthesis; selenocysteinyl-tRNA(Sec) biosynthesis; L-seryl-tRNA(Sec) from L-serine and tRNA(Sec): step 1/1. Functionally, catalyzes the attachment of serine to tRNA(Ser). Is also able to aminoacylate tRNA(Sec) with serine, to form the misacylated tRNA L-seryl-tRNA(Sec), which will be further converted into selenocysteinyl-tRNA(Sec). The chain is Serine--tRNA ligase from Burkholderia thailandensis (strain ATCC 700388 / DSM 13276 / CCUG 48851 / CIP 106301 / E264).